A 499-amino-acid polypeptide reads, in one-letter code: NAD(P)H-quinone oxidoreductase chain 4, chloroplastic (499 aa).

14 helical membrane-spanning segments follow: residues 4-24, 31-51, 87-107, 113-133, 134-154, 167-187, 211-231, 242-262, 274-294, 310-330, 331-351, 385-405, 416-436, and 462-482; these read FPWL…IPFL, IIRW…TYIF, IGLI…AWPV, LFYF…ASQD, ILLF…LLAM, FILY…IMAF, IIIY…IPFH, HYST…YGLI, SFFA…AALT, VSHM…GLNG, AILQ…LAGI, SLAL…LGVI, IIII…LLSM, and IFIL…PNFV.

It belongs to the complex I subunit 4 family.

Its subcellular location is the plastid. It is found in the chloroplast thylakoid membrane. It carries out the reaction a plastoquinone + NADH + (n+1) H(+)(in) = a plastoquinol + NAD(+) + n H(+)(out). The enzyme catalyses a plastoquinone + NADPH + (n+1) H(+)(in) = a plastoquinol + NADP(+) + n H(+)(out). The polypeptide is NAD(P)H-quinone oxidoreductase chain 4, chloroplastic (ndhD) (Marchantia polymorpha (Common liverwort)).